The sequence spans 945 residues: Splicing factor, suppressor of white-apricot homolog (945 aa).

Disordered stretches follow at residues 1–28 (MYGA…GTGT) and 156–185 (DYYD…EENE). 2 stretches are compositionally biased toward basic and acidic residues: residues 9–21 (AKPE…KEEA) and 169–178 (PSKQREKNEA). The stretch at 211–253 (IIERTANFVCKQGAQFEIMLKAKQARNSQFDFLRFDHYLNPYY) is one SURP motif 1 repeat. The segment at 271 to 301 (SKNEEKKKSGPTSDNEEEDDEEDGSYLHPSL) is disordered. Ser283 carries the post-translational modification Phosphoserine. The segment covering 284-294 (DNEEEDDEEDG) has biased composition (acidic residues). N6-acetyllysine is present on Lys315. Disordered regions lie at residues 332–355 (KAQA…PSQV) and 403–448 (SSSP…PVAI). The span at 335–352 (ADSSAPAPPTADGTPAQP) shows a compositional bias: low complexity. Residues 412–426 (VPPPPGTTPPPPPTT) are compositionally biased toward pro residues. Positions 427-447 (AEPSSGVTSTTTTTSALAPVA) are enriched in low complexity. An SURP motif 2 repeat occupies 458-498 (VIDKLAEYVARNGLKFETSVRAKNDQRFEFLQPWHQYNAYY). Disordered regions lie at residues 512–564 (GSTQ…KSTV), 589–680 (PLEK…QAER), and 712–921 (DTGV…VQSK). Over residues 514–527 (TQAASTAEEAPTET) the composition is skewed to low complexity. Residues 528–540 (AVEESGEAGEDGA) are compositionally biased toward acidic residues. Residues 589–598 (PLEKNRVKLD) show a composition bias toward basic and acidic residues. 2 positions are modified to phosphoserine: Ser601 and Ser621. Residues 615 to 630 (SSVANPSPAAAPPSVA) are compositionally biased toward low complexity. The stretch at 632 to 686 (EEKKPQLTQEELEAKQAKQKLEDRLAAAAREKLAQASKESKEKQLQAERKRKAAL) forms a coiled coil. Thr639 is subject to Phosphothreonine. 2 stretches are compositionally biased toward basic and acidic residues: residues 643-679 (LEAK…LQAE) and 733-752 (KPPE…EERE). Basic residues-rich tracts occupy residues 753 to 787 (KKKK…KAKH) and 795 to 810 (TVRR…RRRA). Residues 811 to 821 (HSPERRREERS) are compositionally biased toward basic and acidic residues. Ser829 and Ser831 each carry phosphoserine. Residues 835–861 (SRKRTRSRSPHEKKKKRRSRSRTKAKA) are compositionally biased toward basic residues. Low complexity predominate over residues 871 to 894 (QAAQRPSAHSAHSASISPVESRGS). The span at 895 to 908 (SQERSRGVSQEKDG) shows a compositional bias: basic and acidic residues. Phosphoserine occurs at positions 899 and 903. The span at 909-920 (QISSAIVSSVQS) shows a compositional bias: low complexity.

The protein localises to the nucleus. In terms of biological role, plays a role as an alternative splicing regulator. Regulates its own expression at the level of RNA processing. Also regulates the splicing of fibronectin and CD45 genes. May act, at least in part, by interaction with other R/S-containing splicing factors. Represses the splicing of MAPT/Tau exon 10. The sequence is that of Splicing factor, suppressor of white-apricot homolog (Sfswap) from Mus musculus (Mouse).